The chain runs to 444 residues: ATP-dependent 6-phosphofructokinase 2 (444 aa).

S55 bears the Phosphoserine mark. Residues G86, 149-150 (RG), and 174-177 (GDGT) each bind ATP. D175 is a binding site for Mg(2+). Residues 203–205 (TVD), 248–250 (MGR), E304, and 362–365 (YMIR) each bind substrate. Catalysis depends on D205, which acts as the Proton acceptor.

Belongs to the phosphofructokinase type A (PFKA) family. PPi-dependent PFK group II subfamily. Atypical ATP-dependent clade 'X' sub-subfamily. Homotetramer. Requires Mg(2+) as cofactor. In terms of tissue distribution, mostly expressed in roots and stems.

The protein localises to the cytoplasm. It catalyses the reaction beta-D-fructose 6-phosphate + ATP = beta-D-fructose 1,6-bisphosphate + ADP + H(+). It participates in carbohydrate degradation; glycolysis; D-glyceraldehyde 3-phosphate and glycerone phosphate from D-glucose: step 3/4. With respect to regulation, allosterically activated by AMP. Functionally, catalyzes the phosphorylation of D-fructose 6-phosphate to fructose 1,6-bisphosphate by ATP, the first committing step of glycolysis. This chain is ATP-dependent 6-phosphofructokinase 2, found in Arabidopsis thaliana (Mouse-ear cress).